Here is a 228-residue protein sequence, read N- to C-terminus: Histidine/lysine/arginine/ornithine transport system permease protein HisQ (228 aa).

At 1-12 (MLYGFSGVILQG) the chain is on the periplasmic side. A helical membrane pass occupies residues 13 to 33 (ALVTLELAISSVVLAVIIGLI). An ABC transmembrane type-1 domain is found at 13 to 212 (ALVTLELAIS…VFTTVSNGVL (200 aa)). Residues 34–58 (GAGGKLSQNRLSGLIFEGYTTLIRG) lie on the Cytoplasmic side of the membrane. The helical transmembrane segment at 59–79 (VPDLVLMLLIFYGLQIALNTV) threads the bilayer. The Periplasmic portion of the chain corresponds to 80–87 (TEAMGVGQ). The helical transmembrane segment at 88–108 (IDIDPMVAGIITLGFIYGAYF) threads the bilayer. The Cytoplasmic portion of the chain corresponds to 109–148 (TETFRGAFMAVPKGHIEAATAFGFTRGQVFRRIMFPSMMR). The helical transmembrane segment at 149-171 (YALPGIGNNWQVILKSTALVSLL) threads the bilayer. Residues 172-194 (GLEDVVKATQLAGKSTWEPFYFA) are Periplasmic-facing. The helical transmembrane segment at 195-215 (IVCGVIYLVFTTVSNGVLLFL) threads the bilayer. The Cytoplasmic portion of the chain corresponds to 216–228 (ERRYSVGVKRADL).

It belongs to the binding-protein-dependent transport system permease family. HisMQ subfamily. In terms of assembly, the HisPMQJ complex is composed of two ATP-binding proteins (HisP), two transmembrane proteins (HisM and HisQ) and a solute-binding protein (HisJ). The HisPMQ-ArgT complex is composed of two ATP-binding proteins (HisP), two transmembrane proteins (HisM and HisQ) and a solute-binding protein (ArgT).

Its subcellular location is the cell inner membrane. Its function is as follows. Part of the ABC transporter complex HisPMQJ involved in histidine transport. Is also part of the ABC transporter complex HisPMQ-ArgT involved in lysine/arginine/ornithine transport. Probably responsible for the translocation of the substrate across the membrane. This chain is Histidine/lysine/arginine/ornithine transport system permease protein HisQ (hisQ), found in Escherichia coli (strain K12).